The sequence spans 205 residues: MRLRLFLAASALALLSGCAGLTSHEALEGQGDAQTWKTHKQQLSELDAWQIDGKVGIRAPRDSGSGTLFWLQRQGYYDIRLSGPLGRGAARLTGREGAVSLEVAGQGRYQAESPEALLEQQLGWRLPVSHLLWWVRGLPAPDSKSRLTLDADSRLARLEQDGWQIEYTRYAEQNGYWLPERLKLHGQDLDITLVIKDWQPRQLGR.

A signal peptide spans 1–17 (MRLRLFLAASALALLSG). The N-palmitoyl cysteine moiety is linked to residue Cys-18. Cys-18 carries S-diacylglycerol cysteine lipidation.

The protein belongs to the LolB family. In terms of assembly, monomer.

It is found in the cell outer membrane. Plays a critical role in the incorporation of lipoproteins in the outer membrane after they are released by the LolA protein. This is Outer-membrane lipoprotein LolB from Pseudomonas paraeruginosa (strain DSM 24068 / PA7) (Pseudomonas aeruginosa (strain PA7)).